Reading from the N-terminus, the 1272-residue chain is Protein diaphanous homolog 1 (1272 aa).

Met-1 is subject to N-acetylmethionine. Residues 1-12 show a composition bias toward gly residues; it reads MEPPGGSLGPGR. Positions 1-84 are disordered; the sequence is MEPPGGSLGP…YGDDPTAQSL (84 aa). Ser-7, Ser-22, and Ser-36 each carry phosphoserine. Over residues 44-65 the composition is skewed to basic and acidic residues; sequence LMADELERFTSMRIKKEKEKPN. Polar residues predominate over residues 67-84; it reads AHRNSSASYGDDPTAQSL. One can recognise a GBD/FH3 domain in the interval 84–449; that stretch reads LQDVSDEQVL…QIVLHKNGAD (366 aa). A coiled-coil region spans residues 468–572; the sequence is MIDKTKVEKS…ASLSAAAITV (105 aa). Positions 573-755 are disordered; the sequence is PPSVPSRAPV…GMPPPPPFGF (183 aa). Pro residues-rich tracts occupy residues 574–589, 596–622, and 640–658; these read PSVP…PPLP, IPPP…PPLP, and SPPP…PPLP. The FH1 domain occupies 583–764; the sequence is PPAPPLPGDS…FGVPAAPVLP (182 aa). Residues 659 to 674 show a composition bias toward low complexity; sequence EGVGIPSPSSLPGGTA. Over residues 675-753 the composition is skewed to pro residues; it reads IPPPPPLPGS…GMGMPPPPPF (79 aa). Position 768 is a phosphothreonine (Thr-768). The FH2 domain maps to 769–1171; that stretch reads PKKLYKPEVQ…MRRAKLAKEK (403 aa). A coiled-coil region spans residues 1039-1196; it reads DELAHVEKAS…IDMNAEGDET (158 aa). 2 positions are modified to N6-acetyllysine: Lys-1057 and Lys-1103. Tyr-1121 is modified (phosphotyrosine). The 29-residue stretch at 1194–1222 folds into the DAD domain; that stretch reads DETGVMDSLLEALQSGAAFRRKRGPRQAN. Phosphoserine occurs at positions 1251 and 1254.

This sequence belongs to the formin homology family. Diaphanous subfamily. As to quaternary structure, homodimer. Interacts with the GTP-bound form of RHOA. Interacts with RHOC, PFY1, MAPRE1 and BAIAP2. Interacts with APC; acts as a scaffold protein for MAPRE1 and APC to stabilize microtubules and promote cell migration. Interacts with SCAI. Interacts with DCAF7, via FH2 domain. Interacts with NCDN. Interacts with OSBPL10, OSBPL2, VIM, TUBB and DYN1. Phosphorylation at Thr-768 is stimulated by cAMP and regulates stability, complex formation and mitochondrial movement. As to expression, expressed in brain, heart, placenta, lung, kidney, pancreas, liver, skeletal muscle and cochlea. Expressed in platelets.

The protein resides in the cell membrane. It localises to the cell projection. The protein localises to the ruffle membrane. Its subcellular location is the cytoplasm. It is found in the cytoskeleton. The protein resides in the microtubule organizing center. It localises to the centrosome. The protein localises to the spindle. Its subcellular location is the nucleus. Functionally, actin nucleation and elongation factor required for the assembly of F-actin structures, such as actin cables and stress fibers. Binds to the barbed end of the actin filament and slows down actin polymerization and depolymerization. Required for cytokinesis, and transcriptional activation of the serum response factor. DFR proteins couple Rho and Src tyrosine kinase during signaling and the regulation of actin dynamics. Functions as a scaffold protein for MAPRE1 and APC to stabilize microtubules and promote cell migration. Has neurite outgrowth promoting activity. Acts in a Rho-dependent manner to recruit PFY1 to the membrane. In hear cells, it may play a role in the regulation of actin polymerization in hair cells. The MEMO1-RHOA-DIAPH1 signaling pathway plays an important role in ERBB2-dependent stabilization of microtubules at the cell cortex. It controls the localization of APC and CLASP2 to the cell membrane, via the regulation of GSK3B activity. In turn, membrane-bound APC allows the localization of the MACF1 to the cell membrane, which is required for microtubule capture and stabilization. Plays a role in the regulation of cell morphology and cytoskeletal organization. Required in the control of cell shape. Plays a role in brain development. Also acts as an actin nucleation and elongation factor in the nucleus by promoting nuclear actin polymerization inside the nucleus to drive serum-dependent SRF-MRTFA activity. The sequence is that of Protein diaphanous homolog 1 (DIAPH1) from Homo sapiens (Human).